Reading from the N-terminus, the 177-residue chain is Mitochondrial inner membrane protease subunit 2 (177 aa).

Residues 19–37 (FFVAVPVAVTFLDRVACVA) traverse the membrane as a helical segment. Residues Ser43 and Lys91 contribute to the active site.

Belongs to the peptidase S26 family. IMP2 subfamily. In terms of assembly, heterodimer of 2 subunits, IMMPL1 and IMMPL2.

It is found in the mitochondrion inner membrane. Its function is as follows. Catalyzes the removal of transit peptides required for the targeting of proteins from the mitochondrial matrix, across the inner membrane, into the inter-membrane space. Known to process the nuclear encoded protein DIABLO. The chain is Mitochondrial inner membrane protease subunit 2 (IMMP2L) from Bos taurus (Bovine).